The primary structure comprises 464 residues: Neuronal acetylcholine receptor subunit beta-3 (464 aa).

Positions 1–30 (MTGFLRVFLVLSATLSGSWVTLTATAGLSS) are cleaved as a signal peptide. The Extracellular portion of the chain corresponds to 31 to 238 (VAEHEDALLR…VTYSFVLRRL (208 aa)). Asparagine 55 and asparagine 172 each carry an N-linked (GlcNAc...) asparagine glycan. Cysteine 159 and cysteine 173 form a disulfide bridge. The next 3 helical transmembrane spans lie at 239–263 (PLFY…VFYL), 271–288 (LSLS…LLVI), and 305–326 (YLLF…VINV). The Cytoplasmic segment spans residues 327 to 434 (HHRSSSTYHP…WKFVAQVLDR (108 aa)). A helical membrane pass occupies residues 435–453 (IFLWLFLIASVLGSILIFI).

The protein belongs to the ligand-gated ion channel (TC 1.A.9) family. Acetylcholine receptor (TC 1.A.9.1) subfamily. Beta-3/CHRNB3 sub-subfamily. Neuronal AChR seems to be composed of two different type of subunits: alpha and beta. CHRNB3/beta-3 subunit is only able to form functional nAChRs when co-assembled with another beta subunit. Participates in pentameric assemblies along with CHRNA4/alpha-4 and CHRNB2/beta-2 subunits and with CHRNA6/alpha-6 as well, forming stoichiometries such as (CHRNA3:CHRNB4)2:CHRNB3, (CHRNA4:CHRNB2)2:CHRNB3 or (CHRNA6:CHRNB2)2:CHRNB3.

It localises to the synaptic cell membrane. The protein localises to the cell membrane. The catalysed reaction is Ca(2+)(in) = Ca(2+)(out). It carries out the reaction K(+)(in) = K(+)(out). It catalyses the reaction Na(+)(in) = Na(+)(out). Its activity is regulated as follows. Activated by a myriad of ligands such as acetylcholine, cytisine, nicotine, choline and epibatidine. In terms of biological role, component of neuronal acetylcholine receptors (nAChRs) that function as pentameric, ligand-gated cation channels with high calcium permeability among other activities. nAChRs are excitatory neurotrasnmitter receptors formed by a collection of nAChR subunits known to mediate synaptic transmission in the nervous system and the neuromuscular junction. Each nAchR subunit confers differential attributes to channel properties, including activation, deactivation and desensitization kinetics, pH sensitivity, cation permeability, and binding to allosteric modulators. Has an accessory rather than functional role and is only able to form functional nAChRs when co-assembled with another beta subunit. Participates in pentameric assemblies along with CHRNA3, CHRNA4, CHRNA6, CHRNB2 and CHRNB4. Modulates receptor assembly and increases receptor sensitivity to nicotine when associated with CHRNB2, CHRNA4 and/or CHRNA6 as well as CHRNA3 and CHRNB4. Seems to play a role in nicotine addiction. This Rattus norvegicus (Rat) protein is Neuronal acetylcholine receptor subunit beta-3 (Chrnb3).